A 92-amino-acid polypeptide reads, in one-letter code: Small ribosomal subunit protein uS19 (92 aa).

This sequence belongs to the universal ribosomal protein uS19 family.

Its function is as follows. Protein S19 forms a complex with S13 that binds strongly to the 16S ribosomal RNA. The chain is Small ribosomal subunit protein uS19 from Chelativorans sp. (strain BNC1).